The following is a 1134-amino-acid chain: ATP-dependent helicase/deoxyribonuclease subunit B (1134 aa).

Position 8 to 15 (8 to 15 (GRAGSGKS)) interacts with ATP. Positions 771, 1089, 1092, and 1098 each coordinate [4Fe-4S] cluster.

This sequence belongs to the helicase family. AddB/RexB type 1 subfamily. In terms of assembly, heterodimer of AddA and AddB. Mg(2+) is required as a cofactor. Requires [4Fe-4S] cluster as cofactor.

Functionally, the heterodimer acts as both an ATP-dependent DNA helicase and an ATP-dependent, dual-direction single-stranded exonuclease. Recognizes the chi site generating a DNA molecule suitable for the initiation of homologous recombination. The AddB subunit has 5' -&gt; 3' nuclease activity but not helicase activity. The sequence is that of ATP-dependent helicase/deoxyribonuclease subunit B from Clostridium novyi (strain NT).